We begin with the raw amino-acid sequence, 361 residues long: 3-dehydroquinate synthase (361 aa).

NAD(+) is bound by residues 72–77, 130–131, K142, and K151; these read SGEKEK and TT. Residues E184, H247, and H264 each contribute to the Zn(2+) site.

It belongs to the sugar phosphate cyclases superfamily. Dehydroquinate synthase family. The cofactor is Co(2+). It depends on Zn(2+) as a cofactor. Requires NAD(+) as cofactor.

The protein localises to the cytoplasm. It carries out the reaction 7-phospho-2-dehydro-3-deoxy-D-arabino-heptonate = 3-dehydroquinate + phosphate. It participates in metabolic intermediate biosynthesis; chorismate biosynthesis; chorismate from D-erythrose 4-phosphate and phosphoenolpyruvate: step 2/7. In terms of biological role, catalyzes the conversion of 3-deoxy-D-arabino-heptulosonate 7-phosphate (DAHP) to dehydroquinate (DHQ). This chain is 3-dehydroquinate synthase, found in Bacillus cereus (strain AH820).